The primary structure comprises 394 residues: Elongation factor Tu (394 aa).

The tr-type G domain occupies 10-204 (KPHVNVGTIG…ALDSYIPEPQ (195 aa)). The G1 stretch occupies residues 19-26 (GHVDHGKT). Residue 19–26 (GHVDHGKT) coordinates GTP. Mg(2+) is bound at residue Thr-26. Positions 60–64 (GITIN) are G2. Residues 81 to 84 (DCPG) form a G3 region. GTP is bound by residues 81–85 (DCPGH) and 136–139 (NKCD). A G4 region spans residues 136–139 (NKCD). The tract at residues 174–176 (SAL) is G5.

The protein belongs to the TRAFAC class translation factor GTPase superfamily. Classic translation factor GTPase family. EF-Tu/EF-1A subfamily. As to quaternary structure, monomer.

It localises to the cytoplasm. It catalyses the reaction GTP + H2O = GDP + phosphate + H(+). Functionally, GTP hydrolase that promotes the GTP-dependent binding of aminoacyl-tRNA to the A-site of ribosomes during protein biosynthesis. This chain is Elongation factor Tu, found in Shewanella baltica (strain OS185).